The chain runs to 321 residues: MDFFQYFFRYYWQLVYMICLMLYITMYILIYNFTGKTLQTVKYFLYPSCTAMLIAMTMAFATQTRNIDNTHSMALLCDGFCKYIGPTFCFYCYNLYTAFGIVVNLINLHTMYYRTLCLKYLDAKKVRLWTLVFMWHYLCPLIYLIVIITSPQRHLEVSMETLSLHPNFDYTPYLTFGGFSQAQKELLDKAAMSLSLISMYYPLIGTYWKHKAMKMLKSHMSPNTSDATRAMLQTLIKGLNFQILLPMLRYIPLTAIYFMIKYTGEQFLISQYTITVLGTIPCILDPLVQIYFIRDAIRKFLACNSSPVRRIYDSWASRMII.

7 helical membrane-spanning segments follow: residues Leu-14 to Thr-34, Val-41 to Ala-61, Tyr-83 to Val-103, Leu-128 to Ile-148, Ala-190 to Trp-208, Asn-240 to Ile-260, and Thr-273 to Ile-293.

The protein belongs to the nematode receptor-like protein srd family.

The protein localises to the membrane. This Caenorhabditis elegans protein is Serpentine receptor class delta-63 (srd-63).